The following is a 384-amino-acid chain: Cytochrome b (384 aa).

The next 4 membrane-spanning stretches (helical) occupy residues 32–52, 76–98, 113–133, and 179–199; these read VGSL…FLAM, WLIR…LHIG, LWVI…MGYC, and FFAL…MHLM. Histidine 82 and histidine 96 together coordinate heme b. Residues histidine 183 and histidine 197 each coordinate heme b. Histidine 202 provides a ligand contact to a ubiquinone. 4 helical membrane passes run 225–245, 289–309, 321–341, and 348–368; these read FIFK…LFVF, LGGV…PYTD, LSKF…NLGQ, and YIEL…LIVP.

Belongs to the cytochrome b family. As to quaternary structure, fungal cytochrome b-c1 complex contains 10 subunits; 3 respiratory subunits, 2 core proteins and 5 low-molecular weight proteins. Cytochrome b-c1 complex is a homodimer. The cofactor is heme b.

Its subcellular location is the mitochondrion inner membrane. Its function is as follows. Component of the ubiquinol-cytochrome c reductase complex (complex III or cytochrome b-c1 complex) that is part of the mitochondrial respiratory chain. The b-c1 complex mediates electron transfer from ubiquinol to cytochrome c. Contributes to the generation of a proton gradient across the mitochondrial membrane that is then used for ATP synthesis. This Candida parapsilosis (Yeast) protein is Cytochrome b (COB).